Here is an 809-residue protein sequence, read N- to C-terminus: Leucine--tRNA ligase (809 aa).

The 'HIGH' region signature appears at 40 to 50 (PYPSGRIHMGH). The 'KMSKS' region signature appears at 579-583 (KMSKS). Residue Lys-582 participates in ATP binding.

It belongs to the class-I aminoacyl-tRNA synthetase family.

It localises to the cytoplasm. The enzyme catalyses tRNA(Leu) + L-leucine + ATP = L-leucyl-tRNA(Leu) + AMP + diphosphate. The sequence is that of Leucine--tRNA ligase from Campylobacter jejuni subsp. jejuni serotype O:23/36 (strain 81-176).